A 218-amino-acid chain; its full sequence is Small ribosomal subunit protein uS3c (218 aa).

Positions 47–118 (VQKNIRISSG…KLNIAITRIS (72 aa)) constitute a KH type-2 domain.

This sequence belongs to the universal ribosomal protein uS3 family. Part of the 30S ribosomal subunit.

It localises to the plastid. It is found in the chloroplast. In Nasturtium officinale (Watercress), this protein is Small ribosomal subunit protein uS3c (rps3).